The chain runs to 333 residues: GTPase Obg (333 aa).

An Obg domain is found at 4-162; it reads GNFVDYVKIY…MDVILELKVL (159 aa). Positions 163–332 constitute an OBG-type G domain; the sequence is ADVGLVGFPN…LKDKLWKMLN (170 aa). GTP-binding positions include 169 to 176, 194 to 198, 216 to 219, 283 to 286, and 313 to 315; these read GFPNAGKS, FTTLK, DIPG, SKCD, and SSV. The Mg(2+) site is built by Ser176 and Thr196.

Belongs to the TRAFAC class OBG-HflX-like GTPase superfamily. OBG GTPase family. As to quaternary structure, monomer. The cofactor is Mg(2+).

The protein localises to the cytoplasm. Its function is as follows. An essential GTPase which binds GTP, GDP and possibly (p)ppGpp with moderate affinity, with high nucleotide exchange rates and a fairly low GTP hydrolysis rate. Plays a role in control of the cell cycle, stress response, ribosome biogenesis and in those bacteria that undergo differentiation, in morphogenesis control. This is GTPase Obg from Flavobacterium johnsoniae (strain ATCC 17061 / DSM 2064 / JCM 8514 / BCRC 14874 / CCUG 350202 / NBRC 14942 / NCIMB 11054 / UW101) (Cytophaga johnsonae).